Reading from the N-terminus, the 327-residue chain is Phenylalanine--tRNA ligase alpha subunit (327 aa).

E252 is a Mg(2+) binding site.

The protein belongs to the class-II aminoacyl-tRNA synthetase family. Phe-tRNA synthetase alpha subunit type 1 subfamily. Tetramer of two alpha and two beta subunits. The cofactor is Mg(2+).

It is found in the cytoplasm. It catalyses the reaction tRNA(Phe) + L-phenylalanine + ATP = L-phenylalanyl-tRNA(Phe) + AMP + diphosphate + H(+). The protein is Phenylalanine--tRNA ligase alpha subunit of Escherichia coli O139:H28 (strain E24377A / ETEC).